Consider the following 752-residue polypeptide: Phosphatidylinositol 4-phosphate 5-kinase 1 (752 aa).

MORN repeat units follow at residues 81 to 103 (YIGS…DGCM), 104 to 126 (YEGD…SGAT), 127 to 149 (YEGE…DGDT), 150 to 172 (YRGT…NGDF), 173 to 195 (YEGT…NGNQ), 196 to 218 (YTGE…NGNR), and 219 to 241 (YEGL…DGSS). The region spanning 349–748 (SKGHKKYDLM…RFRDFISRIF (400 aa)) is the PIPK domain. Residues 708–729 (YDITKKIEHAYKSLQADPASIS) are activation loop.

Post-translationally, phosphorylation inactivates the enzyme. In terms of tissue distribution, expressed in the whole plant, preferentially in roots. Strongly expressed in meristematic tissues, namely procambial cell layers.

The enzyme catalyses a 1,2-diacyl-sn-glycero-3-phospho-(1D-myo-inositol 4-phosphate) + ATP = a 1,2-diacyl-sn-glycero-3-phospho-(1D-myo-inositol-4,5-bisphosphate) + ADP + H(+). In terms of biological role, catalyzes the synthesis of phosphatidylinositol 4,5-bisphosphate and phosphatidylinositol 3,4-bisphosphate. The sequence is that of Phosphatidylinositol 4-phosphate 5-kinase 1 (PIP5K1) from Arabidopsis thaliana (Mouse-ear cress).